The chain runs to 578 residues: Proline--tRNA ligase (578 aa).

It belongs to the class-II aminoacyl-tRNA synthetase family. ProS type 1 subfamily. In terms of assembly, homodimer.

Its subcellular location is the cytoplasm. It carries out the reaction tRNA(Pro) + L-proline + ATP = L-prolyl-tRNA(Pro) + AMP + diphosphate. In terms of biological role, catalyzes the attachment of proline to tRNA(Pro) in a two-step reaction: proline is first activated by ATP to form Pro-AMP and then transferred to the acceptor end of tRNA(Pro). As ProRS can inadvertently accommodate and process non-cognate amino acids such as alanine and cysteine, to avoid such errors it has two additional distinct editing activities against alanine. One activity is designated as 'pretransfer' editing and involves the tRNA(Pro)-independent hydrolysis of activated Ala-AMP. The other activity is designated 'posttransfer' editing and involves deacylation of mischarged Ala-tRNA(Pro). The misacylated Cys-tRNA(Pro) is not edited by ProRS. The protein is Proline--tRNA ligase of Brachyspira hyodysenteriae (strain ATCC 49526 / WA1).